A 373-amino-acid polypeptide reads, in one-letter code: NAD(P)H-quinone oxidoreductase subunit 1 (373 aa).

9 consecutive transmembrane segments (helical) span residues 29 to 49, 64 to 84, 98 to 118, 129 to 149, 177 to 197, 202 to 222, 267 to 287, 309 to 329, and 348 to 368; these read LWVPLPMLLMVIAATLGVMVM, IGPNMAGPQGVLIPIADGIKL, VLFTLGPILVFLPVFLCYLVV, IAIGVFFLIATSSVQPIGLLM, LALSVLAVVLMSNGLDTVGIV, GLGILSWNVWRQPIGFVIFLI, LLASLIAAVLYLGGWSFVVPV, VLGILMTMVKAFIFVFLAILL, and FLLPVSFVNLLLTAALKLAFP.

This sequence belongs to the complex I subunit 1 family. In terms of assembly, NDH-1 is composed of at least 11 different subunits.

It is found in the cellular thylakoid membrane. The catalysed reaction is a plastoquinone + NADH + (n+1) H(+)(in) = a plastoquinol + NAD(+) + n H(+)(out). It carries out the reaction a plastoquinone + NADPH + (n+1) H(+)(in) = a plastoquinol + NADP(+) + n H(+)(out). NDH-1 shuttles electrons from an unknown electron donor, via FMN and iron-sulfur (Fe-S) centers, to quinones in the respiratory and/or the photosynthetic chain. The immediate electron acceptor for the enzyme in this species is believed to be plastoquinone. Couples the redox reaction to proton translocation, and thus conserves the redox energy in a proton gradient. This chain is NAD(P)H-quinone oxidoreductase subunit 1, found in Synechococcus sp. (strain JA-3-3Ab) (Cyanobacteria bacterium Yellowstone A-Prime).